Reading from the N-terminus, the 367-residue chain is o-succinylbenzoate synthase (367 aa).

K164 serves as the catalytic Proton donor. Positions 189, 214, and 239 each coordinate Mg(2+). K263 functions as the Proton acceptor in the catalytic mechanism.

The protein belongs to the mandelate racemase/muconate lactonizing enzyme family. MenC type 2 subfamily. As to quaternary structure, homodimer. A divalent metal cation serves as cofactor.

The catalysed reaction is (1R,6R)-6-hydroxy-2-succinyl-cyclohexa-2,4-diene-1-carboxylate = 2-succinylbenzoate + H2O. The protein operates within quinol/quinone metabolism; 1,4-dihydroxy-2-naphthoate biosynthesis; 1,4-dihydroxy-2-naphthoate from chorismate: step 4/7. It participates in quinol/quinone metabolism; menaquinone biosynthesis. Converts 2-succinyl-6-hydroxy-2,4-cyclohexadiene-1-carboxylate (SHCHC) to 2-succinylbenzoate (OSB). Also acts as a N-succinylamino acid racemase (NSAR) that catalyzes the racemization of N-succinyl-L-phenylglycine. Since the gene is encoded in a menaquinone synthesis operon, OSB synthase is probably the physiological activity. A pathway that requires NSAR activity has not been identified in this species, so whether NSAR is also a biological activity is unknown. The polypeptide is o-succinylbenzoate synthase (Enterococcus faecalis (strain ATCC 700802 / V583)).